A 40-amino-acid chain; its full sequence is Hemoglobin subunit alpha-2 (40 aa).

One can recognise a Globin domain in the interval V1 to K40.

The protein belongs to the globin family. Heterotetramer of two alpha chains and two beta chains. In terms of tissue distribution, red blood cells.

Involved in oxygen transport from the lung to the various peripheral tissues. This chain is Hemoglobin subunit alpha-2, found in Saara hardwickii (Indian spiny-tailed lizard).